The sequence spans 95 residues: uncharacterized protein (95 aa).

Residues 14 to 50 adopt a coiled-coil conformation; sequence KMEQKLQEQLDGLLEKYTELLLGETNDELKEEVKQWI.

This is an uncharacterized protein from Bacillus subtilis (strain 168).